A 520-amino-acid chain; its full sequence is 2,3-bisphosphoglycerate-independent phosphoglycerate mutase (520 aa).

Asp13 and Ser63 together coordinate Mn(2+). Ser63 functions as the Phosphoserine intermediate in the catalytic mechanism. Residues His124, 154 to 155, Arg192, Arg198, 268 to 271, and Lys342 contribute to the substrate site; these read RD and RADR. Residues Asp409, His413, Asp450, His451, and His469 each coordinate Mn(2+).

Belongs to the BPG-independent phosphoglycerate mutase family. In terms of assembly, monomer. Mn(2+) serves as cofactor.

It carries out the reaction (2R)-2-phosphoglycerate = (2R)-3-phosphoglycerate. It participates in carbohydrate degradation; glycolysis; pyruvate from D-glyceraldehyde 3-phosphate: step 3/5. In terms of biological role, catalyzes the interconversion of 2-phosphoglycerate and 3-phosphoglycerate. This chain is 2,3-bisphosphoglycerate-independent phosphoglycerate mutase, found in Colwellia psychrerythraea (strain 34H / ATCC BAA-681) (Vibrio psychroerythus).